The primary structure comprises 430 residues: Adenylosuccinate synthetase (430 aa).

GTP contacts are provided by residues 12 to 18 (GDEGKGK) and 40 to 42 (GHT). Aspartate 13 (proton acceptor) is an active-site residue. Aspartate 13 and glycine 40 together coordinate Mg(2+). Residues 13-16 (DEGK), 38-41 (NAGH), threonine 130, arginine 144, glutamine 224, threonine 239, and arginine 303 contribute to the IMP site. The Proton donor role is filled by histidine 41. Residue 299-305 (VNTGRKR) participates in substrate binding. GTP is bound by residues arginine 305, 331–333 (KLD), and 413–415 (STS).

Belongs to the adenylosuccinate synthetase family. As to quaternary structure, homodimer. It depends on Mg(2+) as a cofactor.

Its subcellular location is the cytoplasm. The catalysed reaction is IMP + L-aspartate + GTP = N(6)-(1,2-dicarboxyethyl)-AMP + GDP + phosphate + 2 H(+). It functions in the pathway purine metabolism; AMP biosynthesis via de novo pathway; AMP from IMP: step 1/2. Functionally, plays an important role in the de novo pathway of purine nucleotide biosynthesis. Catalyzes the first committed step in the biosynthesis of AMP from IMP. The sequence is that of Adenylosuccinate synthetase from Rhodopseudomonas palustris (strain ATCC BAA-98 / CGA009).